A 417-amino-acid polypeptide reads, in one-letter code: Phosphoglycerate kinase 1 (417 aa).

(2R)-3-phosphoglycerate is bound by residues Val-23, Asp-24, Phe-25, Asn-26, Asn-38, Arg-39, Ser-62, His-63, Gly-65, Arg-66, Leu-121, Arg-122, His-168, and Arg-169. Gly-212 contacts ADP. CDP is bound at residue Gly-212. AMP is bound by residues Ala-213 and Lys-214. ATP is bound at residue Ala-213. Ala-213 is a binding site for Mg(2+). Asp-217 contributes to the CDP binding site. Asp-217 contacts Mg(2+). AMP is bound at residue Lys-218. Position 218 (Lys-218) interacts with ATP. ADP is bound at residue Gly-236. Position 236 (Gly-236) interacts with CDP. Gly-237 and Gly-311 together coordinate AMP. Residues Gly-237 and Gly-311 each coordinate ATP. Gly-336 and Phe-341 together coordinate CDP. Phe-341 lines the ADP pocket. Residue Glu-342 participates in AMP binding. Glu-342, Asp-374, and Thr-375 together coordinate ATP. Asp-374 contributes to the Mg(2+) binding site.

Belongs to the phosphoglycerate kinase family. As to quaternary structure, monomer. Requires Mg(2+) as cofactor.

Its subcellular location is the cytoplasm. It localises to the mitochondrion. It carries out the reaction (2R)-3-phosphoglycerate + ATP = (2R)-3-phospho-glyceroyl phosphate + ADP. It functions in the pathway carbohydrate degradation; glycolysis; pyruvate from D-glyceraldehyde 3-phosphate: step 2/5. In terms of biological role, catalyzes one of the two ATP producing reactions in the glycolytic pathway via the reversible conversion of 1,3-diphosphoglycerate to 3-phosphoglycerate. Both L- and D- forms of purine and pyrimidine nucleotides can be used as substrates, but the activity is much lower on pyrimidines. Negatively regulates the biosynthesis of acetyl-CoA from pyruvate in the mitochondrion. This chain is Phosphoglycerate kinase 1 (PGK1), found in Rhizopus niveus.